Consider the following 103-residue polypeptide: Small ribosomal subunit protein uS10 (103 aa).

The protein belongs to the universal ribosomal protein uS10 family. In terms of assembly, part of the 30S ribosomal subunit.

Its function is as follows. Involved in the binding of tRNA to the ribosomes. In Azoarcus sp. (strain BH72), this protein is Small ribosomal subunit protein uS10.